The chain runs to 468 residues: Shaggy-related protein kinase theta (468 aa).

Disordered regions lie at residues 1–53 (MNVM…DQST) and 91–112 (HANR…CGTE). The region spanning 134 to 418 (YMAQRVVGTG…ALEACAHPFF (285 aa)) is the Protein kinase domain. ATP-binding positions include 140–148 (VGTGSFGVV) and K163. D259 (proton acceptor) is an active-site residue. At Y294 the chain carries Phosphotyrosine.

It belongs to the protein kinase superfamily. CMGC Ser/Thr protein kinase family. GSK-3 subfamily. Autophosphorylated mainly on threonine and serine residues. As to expression, in developing pollen.

It carries out the reaction L-seryl-[protein] + ATP = O-phospho-L-seryl-[protein] + ADP + H(+). The enzyme catalyses L-threonyl-[protein] + ATP = O-phospho-L-threonyl-[protein] + ADP + H(+). May mediate extracellular signals to regulate transcription in differentiating cells. This chain is Shaggy-related protein kinase theta, found in Brassica napus (Rape).